The chain runs to 298 residues: 1,2-dihydroxynaphthalene dioxygenase (298 aa).

2 VOC domains span residues 6–121 (ELGY…IFYG) and 146–267 (GIGH…FGWG). Histidine 149 contacts Fe cation. Residues histidine 149, 196 to 197 (QH), histidine 212, and tyrosine 253 contribute to the substrate site. Histidine 212 provides a ligand contact to Fe cation. Position 263 (glutamate 263) interacts with Fe cation.

It belongs to the extradiol ring-cleavage dioxygenase family. In terms of assembly, homooctamer. It depends on Fe(2+) as a cofactor.

The enzyme catalyses naphthalene-1,2-diol + O2 = 2-hydroxychromene-2-carboxylate + H(+). It functions in the pathway aromatic compound metabolism; naphthalene degradation. In terms of biological role, involved in the naphthalene and naphthalenesulfonate catabolic pathway. Catalyzes the meta-cleavage of 1,2-dihydroxynaphthalene (1,2-DHN) to yield 2-hydroxychromene-2-carboxylic acid. Can also cleave 1,2,5-trihydroxynaphthalene (1,2,5-THN), 1,2,6-trihydroxynaphthalene (1,2,6-THN), 1,2,7-trihydroxynaphthalene (1,2,7-THN), 2,3-dihydroxybiphenyl, 3,4-dihydroxybiphenyl, catechol, 3-methylcatechol and 4-methylcatechol. This is 1,2-dihydroxynaphthalene dioxygenase (nsaC) from Sphingobium xenophagum.